The sequence spans 200 residues: Pyridoxal 5'-phosphate synthase subunit PdxT (200 aa).

L-glutamine is bound at residue 52-54; sequence GES. Catalysis depends on cysteine 84, which acts as the Nucleophile. L-glutamine is bound by residues arginine 116 and 145–146; that span reads IR. Active-site charge relay system residues include histidine 181 and glutamate 183.

Belongs to the glutaminase PdxT/SNO family. In terms of assembly, in the presence of PdxS, forms a dodecamer of heterodimers. Only shows activity in the heterodimer.

It carries out the reaction aldehydo-D-ribose 5-phosphate + D-glyceraldehyde 3-phosphate + L-glutamine = pyridoxal 5'-phosphate + L-glutamate + phosphate + 3 H2O + H(+). The enzyme catalyses L-glutamine + H2O = L-glutamate + NH4(+). The protein operates within cofactor biosynthesis; pyridoxal 5'-phosphate biosynthesis. Functionally, catalyzes the hydrolysis of glutamine to glutamate and ammonia as part of the biosynthesis of pyridoxal 5'-phosphate. The resulting ammonia molecule is channeled to the active site of PdxS. This chain is Pyridoxal 5'-phosphate synthase subunit PdxT, found in Saccharolobus islandicus (strain Y.N.15.51 / Yellowstone #2) (Sulfolobus islandicus).